Here is a 110-residue protein sequence, read N- to C-terminus: Senescence associated gene 20 (110 aa).

The sequence is that of Senescence associated gene 20 from Arabidopsis thaliana (Mouse-ear cress).